Consider the following 425-residue polypeptide: MSTPSSSLTTDESPASFILPDLVSHCPFPLRYHPKGDEVAKQTVHWLDSNCPDLTAKERKAMYGLQAGELTGYCYPYTTPERLRVVADFLNYLFHLDNISDGMMTRETAVLADVVMNALWFPEDYRPTKGQAAEELNPGKLARDFWSRCIPDCGPGTQARFKETFGSFFEAVNIQARARDEGVIPDLESYIDVRRDTSGCKPCWVLIEYALGIDLPDFVVEHPVIAALNQGTNDLVTWSNDIFSYNVEQSKGDTHNMIIILMEHHGHTLQSAVDYVGSLCQQTINTFCENKQQLPSWGPEIDDMVAKYVQGLEDWIVGSLHWSFQTRRYFGDEGQEIKQHRLVKLLTVAPPPPPPPPTPPPQSSDADTKKQKVKAQDGKGPVSDEEVWALVRAEQSKGSILESLFGFLTTSLSRIFFGYFFAYSH.

Mg(2+)-binding residues include Asp-97, Asp-101, Asn-240, Ser-244, and Glu-248. The short motif at 97 to 101 (DNISD) is the DDXXD motif element. The disordered stretch occupies residues 348–382 (VAPPPPPPPPTPPPQSSDADTKKQKVKAQDGKGPV). Over residues 349–362 (APPPPPPPPTPPPQ) the composition is skewed to pro residues. The span at 366 to 377 (ADTKKQKVKAQD) shows a compositional bias: basic and acidic residues.

Belongs to the terpene synthase family. Mg(2+) is required as a cofactor.

It catalyses the reaction (2E,6E)-farnesyl diphosphate = alpha-muurolene + diphosphate. The catalysed reaction is (2E,6E)-farnesyl diphosphate = gamma-muurolene + diphosphate. It carries out the reaction (2E,6E)-farnesyl diphosphate = (+)-(R)-germacrene A + diphosphate. Functionally, sesquiterpene synthase that catalyzes the formation of alpha-muurolene, and at lower level (+)-(R)-germacrene A and gamma-muurolene. The chain is Alpha-muurolene synthase (COP3) from Coprinopsis cinerea (strain Okayama-7 / 130 / ATCC MYA-4618 / FGSC 9003) (Inky cap fungus).